The primary structure comprises 923 residues: SPX and EXS domain-containing protein 1 (923 aa).

The 326-residue stretch at 1–326 (MKFGKKLRFE…PMNSSIKLDQ (326 aa)) folds into the SPX domain. Composition is skewed to low complexity over residues 94-147 (QEQS…QQQQ) and 186-195 (TTTTTTTTTT). Disordered regions lie at residues 94 to 150 (QEQS…QDLK) and 185 to 208 (PTTT…FKNK). 9 consecutive transmembrane segments (helical) span residues 382–402 (LKLG…IILF), 416–436 (FVST…VWLW), 471–491 (ASFL…TVTG), 499–519 (PAQV…FFPF), 529–551 (LLFI…RALF), 591–611 (SIAL…QCIL), 620–640 (IHLG…FSAL), 655–675 (ILWC…DVVV), and 700–720 (WSYY…TLTI). Residues 585–785 (RCNQVNSIAL…KNEVPKVESP (201 aa)) form the EXS domain. Positions 793–871 (SSYPYRQDNF…NNSPSGSNSS (79 aa)) are disordered.

Belongs to the SYG1 (TC 2.A.94) family.

The protein resides in the membrane. The protein is SPX and EXS domain-containing protein 1 of Dictyostelium discoideum (Social amoeba).